Consider the following 152-residue polypeptide: Ribonuclease pancreatic (152 aa).

The signal sequence occupies residues 1 to 24 (MALDKSVILLPLLVLVLLVLGCLG). Residues lysine 31 and arginine 34 each coordinate substrate. Residue histidine 36 is the Proton acceptor of the active site. N-linked (GlcNAc...) asparagine glycosylation occurs at asparagine 46. 4 disulfide bridges follow: cysteine 50–cysteine 108, cysteine 64–cysteine 119, cysteine 82–cysteine 134, and cysteine 89–cysteine 96. Substrate-binding positions include 65–69 (KPVNT), lysine 90, and arginine 109. An N-linked (GlcNAc...) asparagine glycan is attached at asparagine 112. The active-site Proton donor is histidine 143.

Belongs to the pancreatic ribonuclease family. As to quaternary structure, monomer. Interacts with and forms tight 1:1 complexes with RNH1. Dimerization of two such complexes may occur. Interaction with RNH1 inhibits this protein.

The protein resides in the secreted. The catalysed reaction is an [RNA] containing cytidine + H2O = an [RNA]-3'-cytidine-3'-phosphate + a 5'-hydroxy-ribonucleotide-3'-[RNA].. It carries out the reaction an [RNA] containing uridine + H2O = an [RNA]-3'-uridine-3'-phosphate + a 5'-hydroxy-ribonucleotide-3'-[RNA].. In terms of biological role, endonuclease that catalyzes the cleavage of RNA on the 3' side of pyrimidine nucleotides. Acts on single-stranded and double-stranded RNA. The protein is Ribonuclease pancreatic (RNASE1) of Papio hamadryas (Hamadryas baboon).